Here is an 82-residue protein sequence, read N- to C-terminus: Large ribosomal subunit protein bL27 (82 aa).

The disordered stretch occupies residues 1–20; that stretch reads MATKKAGGSSSNGRDSIGKR.

It belongs to the bacterial ribosomal protein bL27 family.

The polypeptide is Large ribosomal subunit protein bL27 (Neorickettsia sennetsu (strain ATCC VR-367 / Miyayama) (Ehrlichia sennetsu)).